The following is a 31-amino-acid chain: U8-ctenitoxin-Co1a (31 aa).

Intrachain disulfides connect cysteine 4/cysteine 18 and cysteine 11/cysteine 24.

Expressed by the venom gland.

Its subcellular location is the secreted. Functionally, blocks voltage-gated sodium channels (Nav). In Ctenus ornatus (Brazilian spider), this protein is U8-ctenitoxin-Co1a.